The following is a 323-amino-acid chain: Quinolinate synthase (323 aa).

2 residues coordinate iminosuccinate: His38 and Ser55. Position 100 (Cys100) interacts with [4Fe-4S] cluster. Residues 126–128 (YIN) and Ser143 contribute to the iminosuccinate site. Cys186 contributes to the [4Fe-4S] cluster binding site. Residues 212-214 (HPE) and Thr229 each bind iminosuccinate. Cys279 lines the [4Fe-4S] cluster pocket.

The protein belongs to the quinolinate synthase family. Type 2 subfamily. It depends on [4Fe-4S] cluster as a cofactor.

It is found in the cytoplasm. It catalyses the reaction iminosuccinate + dihydroxyacetone phosphate = quinolinate + phosphate + 2 H2O + H(+). The protein operates within cofactor biosynthesis; NAD(+) biosynthesis; quinolinate from iminoaspartate: step 1/1. Catalyzes the condensation of iminoaspartate with dihydroxyacetone phosphate to form quinolinate. The chain is Quinolinate synthase from Gloeothece citriformis (strain PCC 7424) (Cyanothece sp. (strain PCC 7424)).